The sequence spans 54 residues: Secreted virulence factor MC69 (54 aa).

A signal peptide spans methionine 1–alanine 18. Cysteine 38 and cysteine 48 are oxidised to a cystine.

The protein belongs to the MC69 virulence factor family.

It is found in the secreted. Its function is as follows. Secreted protein required for appressorial penetration of intact host epidermal cells and for pathogenicity. The polypeptide is Secreted virulence factor MC69 (Colletotrichum orbiculare (strain 104-T / ATCC 96160 / CBS 514.97 / LARS 414 / MAFF 240422) (Cucumber anthracnose fungus)).